Consider the following 208-residue polypeptide: Small ribosomal subunit protein uS4 (208 aa).

The region spanning 98 to 159 is the S4 RNA-binding domain; that stretch reads LRLDNVVFRL…RSKKVVRITE (62 aa).

Belongs to the universal ribosomal protein uS4 family. Part of the 30S ribosomal subunit. Contacts protein S5. The interaction surface between S4 and S5 is involved in control of translational fidelity.

Functionally, one of the primary rRNA binding proteins, it binds directly to 16S rRNA where it nucleates assembly of the body of the 30S subunit. With S5 and S12 plays an important role in translational accuracy. In Anaeromyxobacter dehalogenans (strain 2CP-1 / ATCC BAA-258), this protein is Small ribosomal subunit protein uS4.